The following is a 572-amino-acid chain: Phospholipase B-like protein B (572 aa).

The N-terminal stretch at 1–28 (MNKLKSNFILNIVILFTILIFNINFINC) is a signal peptide. N73, N138, N219, N427, N544, and N564 each carry an N-linked (GlcNAc...) asparagine glycan.

It belongs to the phospholipase B-like family.

The protein localises to the secreted. Probable phospholipase. The protein is Phospholipase B-like protein B (plbB) of Dictyostelium discoideum (Social amoeba).